A 540-amino-acid chain; its full sequence is Cytokinin dehydrogenase 5 (540 aa).

The first 22 residues, Met1–Ala22, serve as a signal peptide directing secretion. The FAD-binding PCMH-type domain maps to Ser63–Ala241. 3 residues coordinate FAD: Ala97, Gly99, and Gly101. Residue His102 is modified to Pros-8alpha-FAD histidine. FAD is bound by residues Ser103, Gln107, Asp165, Thr170, Ser176, Ile180, and Ile231. N-linked (GlcNAc...) asparagine glycosylation is found at Asn310 and Asn406. Residues Tyr479 and Gln517 each contribute to the FAD site.

The protein belongs to the oxygen-dependent FAD-linked oxidoreductase family. FAD serves as cofactor. In terms of tissue distribution, expressed in the developing leaf petioles and in the rib zone of the axillary shoot meristems. In roots, expressed in the vascular cylinder within the root apical meristem and only faintly detectable in the differentiated root.

The protein localises to the secreted. It is found in the extracellular space. It carries out the reaction N(6)-dimethylallyladenine + A + H2O = 3-methyl-2-butenal + adenine + AH2. Its function is as follows. Catalyzes the oxidation of cytokinins, a family of N(6)-substituted adenine derivatives that are plant hormones, where the substituent is an isopentenyl group. In association with CKX3 regulates the activity of the reproductive meristems, flower organ size and ovule formation. This is Cytokinin dehydrogenase 5 (CKX5) from Arabidopsis thaliana (Mouse-ear cress).